Here is a 425-residue protein sequence, read N- to C-terminus: CAAX prenyl protease 1 homolog (425 aa).

The next 5 helical transmembrane spans lie at 3–23 (LPYL…ETYL), 62–80 (FHFI…ILYY), 109–129 (LAFL…FSLY), 155–175 (GILL…IIVQ), and 188–208 (FMFA…APLF). His284 serves as a coordination point for Zn(2+). Glu285 is an active-site residue. His288 contacts Zn(2+). 2 consecutive transmembrane segments (helical) span residues 295-315 (VYSF…YTLV) and 332-352 (VIIG…LLSF). Glu362 provides a ligand contact to Zn(2+). The active-site Proton donor is the Asp366.

It belongs to the peptidase M48A family. Zn(2+) serves as cofactor.

The protein localises to the endoplasmic reticulum membrane. It catalyses the reaction Hydrolyzes the peptide bond -P2-(S-farnesyl or geranylgeranyl)C-P1'-P2'-P3'-COOH where P1' and P2' are amino acids with aliphatic side chains and P3' is any C-terminal residue.. Its function is as follows. Proteolytically removes the C-terminal three residues of farnesylated proteins. The protein is CAAX prenyl protease 1 homolog (FACE1) of Oryza sativa subsp. japonica (Rice).